Consider the following 64-residue polypeptide: Phylloxin-S1 (64 aa).

The first 22 residues, 1-22 (MVFLKKSLLLVLFVGLVSLSIC), serve as a signal peptide directing secretion. A propeptide spanning residues 23–44 (EENKREEHEEVEENAEKAEEKR) is cleaved from the precursor. Glutamine amide is present on Q63.

Expressed by the skin glands.

The protein localises to the secreted. Its function is as follows. Antimicrobial peptide against both Gram-positive and Gram-negative bacteria. The chain is Phylloxin-S1 from Phyllomedusa sauvagei (Sauvage's leaf frog).